We begin with the raw amino-acid sequence, 64 residues long: Small ribosomal subunit protein eS17 (64 aa).

This sequence belongs to the eukaryotic ribosomal protein eS17 family.

This is Small ribosomal subunit protein eS17 from Methanococcoides burtonii (strain DSM 6242 / NBRC 107633 / OCM 468 / ACE-M).